We begin with the raw amino-acid sequence, 338 residues long: RNA 3'-terminal phosphate cyclase (338 aa).

ATP is bound by residues glutamine 103 and 283-287; that span reads YLADQ. The active-site Tele-AMP-histidine intermediate is the histidine 308.

This sequence belongs to the RNA 3'-terminal cyclase family. Type 1 subfamily.

Its subcellular location is the cytoplasm. The enzyme catalyses a 3'-end 3'-phospho-ribonucleotide-RNA + ATP = a 3'-end 2',3'-cyclophospho-ribonucleotide-RNA + AMP + diphosphate. In terms of biological role, catalyzes the conversion of 3'-phosphate to a 2',3'-cyclic phosphodiester at the end of RNA. The mechanism of action of the enzyme occurs in 3 steps: (A) adenylation of the enzyme by ATP; (B) transfer of adenylate to an RNA-N3'P to produce RNA-N3'PP5'A; (C) and attack of the adjacent 2'-hydroxyl on the 3'-phosphorus in the diester linkage to produce the cyclic end product. The biological role of this enzyme is unknown but it is likely to function in some aspects of cellular RNA processing. The protein is RNA 3'-terminal phosphate cyclase of Escherichia coli O9:H4 (strain HS).